Reading from the N-terminus, the 462-residue chain is 7-hydroxymethyl chlorophyll a reductase, chloroplastic (462 aa).

The transit peptide at 1 to 20 directs the protein to the chloroplast; that stretch reads MITVVTSRLSLLPPVFSVVN.

Belongs to the FrhB family. Interacts with SGR1, the chlorophyll catabolic enzymes (CCEs) NYC1, NOL and RCCR, and the LHCII complex. Part of a SGR1-CCE-LHCII complex, which acts in chlorophyll breakdown. It depends on FAD as a cofactor. The cofactor is iron-sulfur cluster.

The protein localises to the plastid. It localises to the chloroplast. It catalyses the reaction chlorophyll a + 2 oxidized [2Fe-2S]-[ferredoxin] + H2O = 7(1)-hydroxychlorophyll a + 2 reduced [2Fe-2S]-[ferredoxin] + 2 H(+). Its function is as follows. Probable iron-sulfur flavoprotein that converts 7-hydroxymethyl chlorophyll a to chlorophyll a using ferredoxin as a reducing equivalent. Catalyzes the reduction of a hydroxymethyl group to a methyl group. Belongs to the chlorophyll catabolic enzymes (CCEs). This chain is 7-hydroxymethyl chlorophyll a reductase, chloroplastic (HCAR), found in Arabidopsis thaliana (Mouse-ear cress).